Reading from the N-terminus, the 423-residue chain is Probable sucrose-phosphate synthase (423 aa).

This sequence belongs to the glycosyltransferase 1 family.

It carries out the reaction beta-D-fructose 6-phosphate + UDP-alpha-D-glucose = sucrose 6(F)-phosphate + UDP + H(+). Its function is as follows. Plays a role in sucrose synthesis by catalyzing the first step of sucrose biosynthesis from UDP-glucose and fructose-6-phosphate. The chain is Probable sucrose-phosphate synthase from Thermosipho melanesiensis (strain DSM 12029 / CIP 104789 / BI429).